The following is a 307-amino-acid chain: Coproporphyrin III ferrochelatase (307 aa).

Fe-coproporphyrin III contacts are provided by residues Tyr12, Arg29, 45–46 (RY), Ser53, and Tyr124. Fe(2+)-binding residues include His181 and Glu263.

It belongs to the ferrochelatase family.

The protein localises to the cytoplasm. It catalyses the reaction Fe-coproporphyrin III + 2 H(+) = coproporphyrin III + Fe(2+). The protein operates within porphyrin-containing compound metabolism; protoheme biosynthesis. Its function is as follows. Involved in coproporphyrin-dependent heme b biosynthesis. Catalyzes the insertion of ferrous iron into coproporphyrin III to form Fe-coproporphyrin III. This is Coproporphyrin III ferrochelatase from Staphylococcus epidermidis (strain ATCC 12228 / FDA PCI 1200).